We begin with the raw amino-acid sequence, 937 residues long: MHRPRRRGTRPPPLALLAALLLAARGADAQETELSVSAELVPTSSWNTSSEIDKGSYLTLDEPMNNITTSLGQTAELHCKVSGNPPPSIRWFKNDAPVVQEPRRISFRATNYGSRLRIRNLDTTDTGYFQCVATNGKKVVSTTGVLFVKFGPPPTASPGSSDEYEEDGFCQPYRGIACARFIGNRTVYMESLHMQGEIENQITAAFTMIGTSSHLSDKCSQFAIPSLCHYAFPYCDETSSVPKPRDLCRDECEVLENVLCQTEYIFARSNPMILMRLKLPNCEDLPQPESPEAANCIRIGIPMADPINKNHKCYNSTGVDYRGTVSVTKSGRQCQPWNSQYPHTHSFTALRFPELNGGHSYCRNPGNQKEAPWCFTLDENFKSDLCDIPACDSKDSKEKNKMEILYILVPSVAIPLAIAFLFFFICVCRNNQKSSSPPVQRQPKPVRGQNVEMSMLNAYKPKSKAKELPLSAVRFMEELGECTFGKIYKGHLYLPGMDHAQLVAIKTLKDYNNPQQWTEFQQEASLMAELHHPNIVCLLGAVTQEQPVCMLFEYMNQGDLHEFLIMRSPHSDVGCSSDEDGTVKSSLDHGDFLHIAIQIAAGMEYLSSHFFVHKDLAARNILIGEQLHVKISDLGLSREIYSADYYRVQSKSSLPIRWMPPEAIMYGKFSSDSDIWSFGVVLWEIFSFGLQPYYGFSNQEVIEMVRKRQLLPCSEDCPPRMYSLMTECWNEIPSRRPRFKDIHVRLRSWEGLSSHTSSTTPSGGNATTQTTSLSASPVSNLSNPRFPNYMFPSQGITPQGQIAGFIGPAIPQNQRFIPINGYPIPPGYAAFPAAHYQPAGPPRVIQHCPPPKSRSPSSASGSTSTGHVASLPSSGSNQEANVPLLPHMSIPNHPGGMGITVFGNKSQKPYKIDSKQSSLLGDSHIHGHTESMISAEV.

The signal sequence occupies residues 1-29 (MHRPRRRGTRPPPLALLAALLLAARGADA). Residues 30–406 (QETELSVSAE…KEKNKMEILY (377 aa)) are Extracellular-facing. Residues 42–141 (PTSSWNTSSE…VATNGKKVVS (100 aa)) form the Ig-like C2-type domain. 2 N-linked (GlcNAc...) asparagine glycosylation sites follow: asparagine 47 and asparagine 66. 9 disulfide bridges follow: cysteine 79–cysteine 131, cysteine 170–cysteine 235, cysteine 178–cysteine 228, cysteine 219–cysteine 260, cysteine 248–cysteine 296, cysteine 252–cysteine 282, cysteine 313–cysteine 391, cysteine 334–cysteine 374, and cysteine 362–cysteine 386. Residues 165-299 (EEDGFCQPYR…SPEAANCIRI (135 aa)) form the FZ domain. Asparagine 184 carries N-linked (GlcNAc...) asparagine glycosylation. Residues 312–391 (KCYNSTGVDY…KSDLCDIPAC (80 aa)) enclose the Kringle domain. N-linked (GlcNAc...) asparagine glycosylation is present at asparagine 315. Residues 407-427 (ILVPSVAIPLAIAFLFFFICV) form a helical membrane-spanning segment. Topologically, residues 428 to 937 (CRNNQKSSSP…HTESMISAEV (510 aa)) are cytoplasmic. Residues 473–746 (VRFMEELGEC…PRFKDIHVRL (274 aa)) form the Protein kinase domain. ATP is bound by residues 479-487 (LGECTFGKI) and lysine 506. Phosphotyrosine; by autocatalysis is present on tyrosine 645. A compositionally biased stretch (low complexity) spans 753-762 (SSHTSSTTPS). Disordered stretches follow at residues 753 to 778 (SSHT…ASPV), 840 to 890 (GPPR…HMSI), and 916 to 937 (QSSL…SAEV). The span at 763–778 (GGNATTQTTSLSASPV) shows a compositional bias: polar residues. Low complexity predominate over residues 854–864 (RSPSSASGSTS). The span at 865–880 (TGHVASLPSSGSNQEA) shows a compositional bias: polar residues.

This sequence belongs to the protein kinase superfamily. Tyr protein kinase family. ROR subfamily. Interacts with ERBB2 and IGFBP5. As to expression, at postnatal P0, expressed in heart, lung, liver, kidney, spleen and inner ear.

It is found in the membrane. The protein localises to the cell projection. The protein resides in the axon. In terms of biological role, has very low kinase activity in vitro and is unlikely to function as a tyrosine kinase in vivo. Receptor for ligand WNT5A which activate downstream NFkB signaling pathway and may result in the inhibition of WNT3A-mediated signaling. In inner ear, crucial for spiral ganglion neurons to innervate auditory hair cells. Via IGFBP5 ligand, forms a complex with ERBB2 to enhance CREB oncogenic signaling. This Mus musculus (Mouse) protein is Inactive tyrosine-protein kinase transmembrane receptor ROR1 (Ror1).